A 121-amino-acid polypeptide reads, in one-letter code: Immunoglobulin heavy variable 6-1 (121 aa).

The signal sequence occupies residues 1–20 (MSVSFLIFLPVLGLPWGVLS). The interval 21 to 45 (QVQLQQSGPGLVKPSQTLSLTCAIS) is framework-1. One can recognise an Ig-like domain in the interval 21-121 (QVQLQQSGPG…EDTAVYYCAR (101 aa)). An intrachain disulfide couples Cys-42 to Cys-119. Residues 46–55 (GDSVSSNSAA) form a complementarity-determining-1 region. The framework-2 stretch occupies residues 56-72 (WNWIRQSPSRGLEWLGR). The complementarity-determining-2 stretch occupies residues 73 to 81 (TYYRSKWYN). Residues 82 to 119 (DYAVSVKSRITINPDTSKNQFSLQLNSVTPEDTAVYYC) form a framework-3 region. Residues 120 to 121 (AR) form a complementarity-determining-3 region.

As to quaternary structure, immunoglobulins are composed of two identical heavy chains and two identical light chains; disulfide-linked.

The protein localises to the secreted. Its subcellular location is the cell membrane. Its function is as follows. V region of the variable domain of immunoglobulin heavy chains that participates in the antigen recognition. Immunoglobulins, also known as antibodies, are membrane-bound or secreted glycoproteins produced by B lymphocytes. In the recognition phase of humoral immunity, the membrane-bound immunoglobulins serve as receptors which, upon binding of a specific antigen, trigger the clonal expansion and differentiation of B lymphocytes into immunoglobulins-secreting plasma cells. Secreted immunoglobulins mediate the effector phase of humoral immunity, which results in the elimination of bound antigens. The antigen binding site is formed by the variable domain of one heavy chain, together with that of its associated light chain. Thus, each immunoglobulin has two antigen binding sites with remarkable affinity for a particular antigen. The variable domains are assembled by a process called V-(D)-J rearrangement and can then be subjected to somatic hypermutations which, after exposure to antigen and selection, allow affinity maturation for a particular antigen. This chain is Immunoglobulin heavy variable 6-1, found in Homo sapiens (Human).